The following is a 208-amino-acid chain: Cysteine-rich protein 2 (208 aa).

The LIM zinc-binding 1 domain occupies 5-57; sequence CPKCDKTVCFAEKVSSLGKDWHKFCLKCERCSKTLTPGGHAEHDGKPFCHKPC. Lys-23 is subject to N6-acetyllysine. A disordered region spans residues 98–119; it reads AEERKASGPPKGPSRASSVTTF. Position 104 is a phosphoserine (Ser-104). Residues 126-178 form the LIM zinc-binding 2 domain; it reads CPRCSKKVYFAEKVTSLGKDWHRPCLHCERCGKTLTPGGHAEHDGQPYCHKPC. Lys-138 and Lys-144 each carry N6-acetyllysine.

Interacts with TGFB1I1.

This chain is Cysteine-rich protein 2 (CRIP2), found in Pongo abelii (Sumatran orangutan).